The following is a 393-amino-acid chain: Methylthioribose kinase (393 aa).

ATP-binding positions include Asn38, Lys53, and 107 to 109 (EDL). Asp225 serves as a coordination point for substrate. 242 to 244 (DPE) is an ATP binding site. Arg332 serves as a coordination point for substrate.

Belongs to the methylthioribose kinase family. As to quaternary structure, homodimer.

It carries out the reaction 5-(methylsulfanyl)-D-ribose + ATP = 5-(methylsulfanyl)-alpha-D-ribose 1-phosphate + ADP + H(+). The protein operates within amino-acid biosynthesis; L-methionine biosynthesis via salvage pathway; S-methyl-5-thio-alpha-D-ribose 1-phosphate from S-methyl-5'-thioadenosine (hydrolase route): step 2/2. Catalyzes the phosphorylation of methylthioribose into methylthioribose-1-phosphate. This Bacillus cereus (strain ATCC 14579 / DSM 31 / CCUG 7414 / JCM 2152 / NBRC 15305 / NCIMB 9373 / NCTC 2599 / NRRL B-3711) protein is Methylthioribose kinase.